We begin with the raw amino-acid sequence, 233 residues long: Small ribosomal subunit protein uS3 (233 aa).

One can recognise a KH type-2 domain in the interval 39–107 (VRQFLMKTLE…PVQINISEVR (69 aa)).

The protein belongs to the universal ribosomal protein uS3 family. Part of the 30S ribosomal subunit. Forms a tight complex with proteins S10 and S14.

In terms of biological role, binds the lower part of the 30S subunit head. Binds mRNA in the 70S ribosome, positioning it for translation. The polypeptide is Small ribosomal subunit protein uS3 (Buchnera aphidicola subsp. Acyrthosiphon pisum (strain APS) (Acyrthosiphon pisum symbiotic bacterium)).